Reading from the N-terminus, the 377-residue chain is MSNGIVIIGSGFAARQLVKNIRKQDATIPLTLIAADSIDEYNKPDLSHVISQGQRADDLTRQTAGEFAGQFNLRLFPHTWVTDIDAEAHVVKSQNNQWQYDKLVLATGASAFVPPVPGRELMLTLNSQQEYRACETQLRDARRVLIVGGGLIGSELAMDFCRAGKAVTLIDNAASILASLMPPEVSSRLQHRLTEMGVHLLLKSQLQGLEKTDSGILATLDHQRSIEVDAVIAATGLRPETALARRAGLTINRGVCVDSYLQTSNADIYALGDCAEINGQVLPFLQPIQLSGMVLAKNLLGNNTPLKLPAMLVKIKTPELPLHLAGETQRQDLRWQINTERQGMVARGVDDADQLRAFVVSEDRMKEAFVLLKTLPV.

The protein belongs to the FAD-dependent oxidoreductase family. It depends on FAD as a cofactor.

It localises to the cytoplasm. It carries out the reaction 2 reduced [nitric oxide reductase rubredoxin domain] + NAD(+) + H(+) = 2 oxidized [nitric oxide reductase rubredoxin domain] + NADH. Its pathway is nitrogen metabolism; nitric oxide reduction. In terms of biological role, one of at least two accessory proteins for anaerobic nitric oxide (NO) reductase. Reduces the rubredoxin moiety of NO reductase. The polypeptide is Nitric oxide reductase FlRd-NAD(+) reductase (Shigella flexneri serotype 5b (strain 8401)).